We begin with the raw amino-acid sequence, 464 residues long: tRNA modification GTPase MnmE (464 aa).

(6S)-5-formyl-5,6,7,8-tetrahydrofolate contacts are provided by Arg-27, Glu-90, and Lys-129. The TrmE-type G domain occupies Gly-222–Ser-384. GTP contacts are provided by residues Asn-232–Ser-237, Ser-251–Thr-257, and Asp-276–Gly-279. Mg(2+)-binding residues include Ser-236 and Thr-257. (6S)-5-formyl-5,6,7,8-tetrahydrofolate is bound at residue Lys-464.

The protein belongs to the TRAFAC class TrmE-Era-EngA-EngB-Septin-like GTPase superfamily. TrmE GTPase family. In terms of assembly, homodimer. Heterotetramer of two MnmE and two MnmG subunits. Requires K(+) as cofactor.

Its subcellular location is the cytoplasm. In terms of biological role, exhibits a very high intrinsic GTPase hydrolysis rate. Involved in the addition of a carboxymethylaminomethyl (cmnm) group at the wobble position (U34) of certain tRNAs, forming tRNA-cmnm(5)s(2)U34. This chain is tRNA modification GTPase MnmE, found in Borreliella afzelii (strain PKo) (Borrelia afzelii).